Reading from the N-terminus, the 273-residue chain is NADPH-dependent 7-cyano-7-deazaguanine reductase (273 aa).

81–83 (VES) contacts substrate. Residue 83–84 (SK) participates in NADPH binding. C179 acts as the Thioimide intermediate in catalysis. The active-site Proton donor is the D186. 218–219 (AE) contributes to the substrate binding site. An NADPH-binding site is contributed by 247–248 (RG).

It belongs to the GTP cyclohydrolase I family. QueF type 2 subfamily. In terms of assembly, homodimer.

It is found in the cytoplasm. The enzyme catalyses 7-aminomethyl-7-carbaguanine + 2 NADP(+) = 7-cyano-7-deazaguanine + 2 NADPH + 3 H(+). Its pathway is tRNA modification; tRNA-queuosine biosynthesis. Functionally, catalyzes the NADPH-dependent reduction of 7-cyano-7-deazaguanine (preQ0) to 7-aminomethyl-7-deazaguanine (preQ1). The sequence is that of NADPH-dependent 7-cyano-7-deazaguanine reductase from Rickettsia felis (strain ATCC VR-1525 / URRWXCal2) (Rickettsia azadi).